The chain runs to 63 residues: Large ribosomal subunit protein bL28 (63 aa).

The protein belongs to the bacterial ribosomal protein bL28 family.

The chain is Large ribosomal subunit protein bL28 from Mycoplasmopsis synoviae (strain 53) (Mycoplasma synoviae).